Reading from the N-terminus, the 72-residue chain is C-hordein (72 aa).

Pro residues predominate over residues 1 to 36; that stretch reads FPQPQEPFPQQPQQPFPLQPQQPFPQQPQQPFPQPQ. The tract at residues 1–61 is disordered; sequence FPQPQEPFPQ…QQPFPLQPHQ (61 aa). Residues 37–50 show a composition bias toward low complexity; the sequence is QPFRQQAELIIPQQ.

In terms of tissue distribution, developing endosperm.

Sulfur-poor seed storage protein. The sequence is that of C-hordein from Hordeum vulgare (Barley).